The sequence spans 467 residues: MSSNDSIMLTPLKEQDPTVAEIMRHEADRQRSSVVLIASENFTSRAVMDALGSVMSNKYSEGYPGARYYGGNKFIDQIETLCQERALAAFNLDPAKWGVNVQCLSGSPANMQVYQAIMPPHGRLMGLDLPSGGHLSHGYQTDTKKISAVSTYFESMPYRVDPNTGLIDYDMLEHDAQLFRPKILVAGTSAYCRLIDYARMRQIADSVNAYLVVDMAHISGLVSAGVIPSPFEYADVVTTTTHKSLRGPRGAMIFFRRGLRKHDKKGNPIYYDLEDKINFSVFPGHQGGPHNHTITALAVALKQCQEPAYKEYQAQVVKNAKVCEEEFKKRGYKLAADGTDSHMVLVDVKSKGVDGARAERVLELINIVTNKNTVPSDKSAFSPSGIRVGTPAMTTRGFKEQDFVRVVDYIDRALTFAANLQKELPKDANKLKDFKAKLGEGEQYPELVQLQKEVAEWASSFPLADKW.

An N6-(pyridoxal phosphate)lysine modification is found at lysine 243.

It belongs to the SHMT family. Homotetramer. Requires pyridoxal 5'-phosphate as cofactor.

It is found in the cytoplasm. The enzyme catalyses (6R)-5,10-methylene-5,6,7,8-tetrahydrofolate + glycine + H2O = (6S)-5,6,7,8-tetrahydrofolate + L-serine. Its pathway is one-carbon metabolism; tetrahydrofolate interconversion. In terms of biological role, interconversion of serine and glycine. The protein is Probable serine hydroxymethyltransferase, cytosolic of Schizosaccharomyces pombe (strain 972 / ATCC 24843) (Fission yeast).